We begin with the raw amino-acid sequence, 257 residues long: Movement protein (257 aa).

Residues 212–257 form a disordered region; the sequence is NQSKKGSNKYVGKRNDNKGLNKEGKLFDKVRIGQNSESSDAESSSF. The segment covering 224–242 has biased composition (basic and acidic residues); it reads KRNDNKGLNKEGKLFDKVR. Residues 247 to 257 are compositionally biased toward low complexity; that stretch reads SESSDAESSSF.

This sequence belongs to the tobamovirus movement protein family.

It localises to the host cytoplasm. The protein resides in the host cytoskeleton. Its subcellular location is the host cell junction. It is found in the host plasmodesma. Functionally, transports viral genome to neighboring plant cells directly through plasmosdesmata, without any budding. The movement protein allows efficient cell to cell propagation, by bypassing the host cell wall barrier. Forms a ribonucleoprotein complex with viral RNA. Binds microtubules and modulates microtubule stability. Can bind double-stranded DNA. In Vicia faba (Broad bean), this protein is Movement protein (MP).